Reading from the N-terminus, the 104-residue chain is Growth-regulated protein homolog (104 aa).

A signal peptide spans 1 to 31 (MAPAATAAAPRLLRAALLLLLLVAAGRRAAG). 2 cysteine pairs are disulfide-bonded: Cys40–Cys66 and Cys42–Cys82.

It belongs to the intercrine alpha (chemokine CxC) family.

It localises to the secreted. Functionally, plays a role in monocyte adhesion to the endothelium. The polypeptide is Growth-regulated protein homolog (Oryctolagus cuniculus (Rabbit)).